The sequence spans 248 residues: Putative amino-acid ABC transporter-binding protein PatH (248 aa).

The signal sequence occupies residues 1-21; sequence MKNWIKVAVAAIALSAATVQA.

It belongs to the bacterial solute-binding protein 3 family.

It is found in the periplasm. Probably part of a binding-protein-dependent transport system for an amino acid. This Vibrio harveyi (Beneckea harveyi) protein is Putative amino-acid ABC transporter-binding protein PatH (patH).